Here is a 113-residue protein sequence, read N- to C-terminus: Prefoldin subunit beta (113 aa).

Belongs to the prefoldin subunit beta family. In terms of assembly, heterohexamer of two alpha and four beta subunits.

The protein resides in the cytoplasm. Molecular chaperone capable of stabilizing a range of proteins. Seems to fulfill an ATP-independent, HSP70-like function in archaeal de novo protein folding. This is Prefoldin subunit beta from Methanococcus maripaludis (strain DSM 14266 / JCM 13030 / NBRC 101832 / S2 / LL).